Reading from the N-terminus, the 500-residue chain is NAD(P)H-quinone oxidoreductase subunit 2, chloroplastic (500 aa).

13 helical membrane passes run 15–35 (ILPESILIFCLLTTLIIDLSL), 42–62 (WIIYLNTIGLILSGLFLCLQW), 79–99 (FSIAFRFCIIIASLLSLLLSI), 109–129 (LMEFVIFLLGATIGGMFLCGA), 132–152 (LITIFTSLECLGLSSYLLAGY), 167–187 (LLVGGASSAILAYGFSWLYGL), 201–221 (LIFADFVNPLIKWITLTCIIV), 247–267 (VVAFLSVASKTAGLALTIRII), 278–298 (WQFLLQILACLTMIVGNLVAI), 306–326 (MLAYSSISQAGYLMIGIISST), 334–354 (LVYMLIYIFMNLGAFGCVILF), 377–397 (ASCLTIFLLSLGGIPPFAGFF), and 400–420 (IYLFWSGWQAGLYILTFVGLL).

Belongs to the complex I subunit 2 family. As to quaternary structure, NDH is composed of at least 16 different subunits, 5 of which are encoded in the nucleus.

The protein localises to the plastid. Its subcellular location is the chloroplast thylakoid membrane. The catalysed reaction is a plastoquinone + NADH + (n+1) H(+)(in) = a plastoquinol + NAD(+) + n H(+)(out). It carries out the reaction a plastoquinone + NADPH + (n+1) H(+)(in) = a plastoquinol + NADP(+) + n H(+)(out). NDH shuttles electrons from NAD(P)H:plastoquinone, via FMN and iron-sulfur (Fe-S) centers, to quinones in the photosynthetic chain and possibly in a chloroplast respiratory chain. The immediate electron acceptor for the enzyme in this species is believed to be plastoquinone. Couples the redox reaction to proton translocation, and thus conserves the redox energy in a proton gradient. This Chaetosphaeridium globosum (Charophycean green alga) protein is NAD(P)H-quinone oxidoreductase subunit 2, chloroplastic.